The chain runs to 854 residues: N-terminal acetyltransferase A complex subunit NAT1 (854 aa).

S2 carries the post-translational modification N-acetylserine. TPR repeat units follow at residues 20-53 (ENDQFLEALKLYEGKQYKKSLKLLDAILKKDGSH), 54-87 (VDSLALKGLDLYSVGEKDDAASYVANAIRKIEGA), 91-124 (PICCHVLGIYMRNTKEYKESIKWFTAALNNGSTN), 126-162 (QIYRDLATLQSQIGDFKNALVSRKKYWEAFLGYRANW), 241-274 (FGLLERKATIYMKLGQLKDASIVYRTLIKRNPDN), 384-417 (IWTNYYLSQHFLFLKDFPKAQEYIDAALDHTPTL), and 452-485 (RFINCKTVKYFLRANNIDKAVEVASLFTKNDDSV). Positions 623-667 (LKRKSDSLDENSDEIQNNGQNSSSQKKKAKKEAAAMNKRKETEAK) form a coiled coil. The interval 626-668 (KSDSLDENSDEIQNNGQNSSSQKKKAKKEAAAMNKRKETEAKS) is disordered. The residue at position 674 (S674) is a Phosphoserine. The stretch at 728-761 (ALCFASLNKFAKRFGTTSGLFGSMAIVLLHATRN) is one TPR 8 repeat.

In terms of assembly, component of the N-terminal acetyltransferase A (NatA) complex, which is composed of ARD1, NAT1 and NAT5. Can self-associate. NAT1 associates with the nascent polypeptide chain and the ribosome. Post-translationally, the N-terminus is blocked.

The protein resides in the cytoplasm. Non-catalytic component of the NatA N-terminal acetyltransferase, which catalyzes acetylation of proteins beginning with Met-Ser, Met-Gly and Met-Ala. N-acetylation plays a role in normal eukaryotic translation and processing, protect against proteolytic degradation and protein turnover. NAT1 anchors ARD1 and NAT5 to the ribosome and may present the N termini of nascent polypeptides for acetylation. The polypeptide is N-terminal acetyltransferase A complex subunit NAT1 (NAT1) (Saccharomyces cerevisiae (strain ATCC 204508 / S288c) (Baker's yeast)).